We begin with the raw amino-acid sequence, 189 residues long: Elongation factor P (189 aa).

The protein belongs to the elongation factor P family.

The protein resides in the cytoplasm. It participates in protein biosynthesis; polypeptide chain elongation. In terms of biological role, involved in peptide bond synthesis. Stimulates efficient translation and peptide-bond synthesis on native or reconstituted 70S ribosomes in vitro. Probably functions indirectly by altering the affinity of the ribosome for aminoacyl-tRNA, thus increasing their reactivity as acceptors for peptidyl transferase. The polypeptide is Elongation factor P (Sinorhizobium medicae (strain WSM419) (Ensifer medicae)).